The sequence spans 426 residues: Serine--tRNA ligase (426 aa).

Position 227–229 (227–229 (TSE)) interacts with L-serine. Residues 258-260 (RKE) and valine 274 contribute to the ATP site. Glutamate 281 serves as a coordination point for L-serine. 345-348 (ELTS) serves as a coordination point for ATP. Threonine 380 lines the L-serine pocket.

It belongs to the class-II aminoacyl-tRNA synthetase family. Type-1 seryl-tRNA synthetase subfamily. As to quaternary structure, homodimer. The tRNA molecule binds across the dimer.

It is found in the cytoplasm. The catalysed reaction is tRNA(Ser) + L-serine + ATP = L-seryl-tRNA(Ser) + AMP + diphosphate + H(+). It carries out the reaction tRNA(Sec) + L-serine + ATP = L-seryl-tRNA(Sec) + AMP + diphosphate + H(+). Its pathway is aminoacyl-tRNA biosynthesis; selenocysteinyl-tRNA(Sec) biosynthesis; L-seryl-tRNA(Sec) from L-serine and tRNA(Sec): step 1/1. Its function is as follows. Catalyzes the attachment of serine to tRNA(Ser). Is also able to aminoacylate tRNA(Sec) with serine, to form the misacylated tRNA L-seryl-tRNA(Sec), which will be further converted into selenocysteinyl-tRNA(Sec). The protein is Serine--tRNA ligase of Clavibacter sepedonicus (Clavibacter michiganensis subsp. sepedonicus).